A 372-amino-acid polypeptide reads, in one-letter code: Envelope phospholipase OPG057 (372 aa).

The YPPL signature appears at 153-156 (YPPL). 2 S-palmitoyl cysteine; by host lipidation sites follow: Cys-185 and Cys-186. The region spanning 307 to 334 (FTIQNNTKLLIVDDEYVHITSANFDGTH) is the PLD phosphodiesterase domain.

It belongs to the orthopoxvirus OPG057 family. Interacts with protein OPG190/B5. Palmitoylated. Attachment of the palmitate moiety is essential for correct intracellular targeting and protein function.

The protein localises to the virion membrane. Its subcellular location is the host Golgi apparatus. The protein resides in the host trans-Golgi network. It is found in the host endoplasmic reticulum membrane. The catalysed reaction is a 1,2-diacyl-sn-glycero-3-phosphocholine + H2O = a 1,2-diacyl-sn-glycero-3-phosphate + choline + H(+). Major envelope protein that plays a role in the biogenesis of the viral double membrane and in egress of virus from the host cell. Produces the wrapped form of virus that is required for cell-to-cell spread. Acts as a lipase with broad specificity including phospholipase C, phospholipase A, and triacylglycerol lipase activities. In Vaccinia virus (strain Western Reserve) (VACV), this protein is Envelope phospholipase OPG057 (OPG057).